A 172-amino-acid chain; its full sequence is uncharacterized protein (172 aa).

This is an uncharacterized protein from Rattus norvegicus (Rat).